Reading from the N-terminus, the 726-residue chain is Biotin--protein ligase (726 aa).

A disordered region spans residues 28-98; sequence EVKDQVSNKQ…SDRGGGPVEH (71 aa). Over residues 43 to 75 the composition is skewed to basic and acidic residues; it reads PKPEPSLEIKPEQDGMEHVGRDDPKALGEEPKQ. Ser147 and Ser299 each carry phosphoserine. One can recognise a BPL/LPL catalytic domain in the interval 463–652; the sequence is KQLGKVILFA…VLEKLIKEFQ (190 aa).

It belongs to the biotin--protein ligase family. In terms of assembly, monomer. Widely expressed. Mostly expressed in muscle, placenta and to a lower extent in the brain, kidney, pancreas, liver and lung.

The protein localises to the cytoplasm. It localises to the mitochondrion. It carries out the reaction apo-[methylmalonyl-CoA:pyruvate carboxytransferase] + biotin + ATP = holo-[methylmalonyl-CoA:pyruvate carboxytransferase] + AMP + diphosphate + H(+). The enzyme catalyses apo-[propionyl-CoA:carbon-dioxide ligase (ADP-forming)] + biotin + ATP = holo-[propionyl-CoA:carbon-dioxide ligase (ADP-forming)] + AMP + diphosphate + H(+). It catalyses the reaction apo-[3-methylcrotonoyl-CoA:carbon-dioxide ligase (ADP-forming)] + biotin + ATP = holo-[3-methylcrotonoyl-CoA:carbon-dioxide ligase (ADP-forming)] + AMP + diphosphate + H(+). The catalysed reaction is biotin + L-lysyl-[protein] + ATP = N(6)-biotinyl-L-lysyl-[protein] + AMP + diphosphate + H(+). Its function is as follows. Biotin--protein ligase catalyzing the biotinylation of the 4 biotin-dependent carboxylases acetyl-CoA-carboxylase, pyruvate carboxylase, propionyl-CoA carboxylase, and methylcrotonyl-CoA carboxylase. This Homo sapiens (Human) protein is Biotin--protein ligase.